A 296-amino-acid chain; its full sequence is Formamidopyrimidine-DNA glycosylase (296 aa).

Catalysis depends on proline 2, which acts as the Schiff-base intermediate with DNA. The Proton donor role is filled by glutamate 3. Lysine 58 serves as the catalytic Proton donor; for beta-elimination activity. Histidine 104, arginine 126, and lysine 169 together coordinate DNA. An FPG-type zinc finger spans residues 260–296 (SVYDREGQACGTPGCGGTVARIVQAGRSTFYCAACQK). Arginine 286 acts as the Proton donor; for delta-elimination activity in catalysis.

Belongs to the FPG family. As to quaternary structure, monomer. Zn(2+) serves as cofactor.

It carries out the reaction Hydrolysis of DNA containing ring-opened 7-methylguanine residues, releasing 2,6-diamino-4-hydroxy-5-(N-methyl)formamidopyrimidine.. The enzyme catalyses 2'-deoxyribonucleotide-(2'-deoxyribose 5'-phosphate)-2'-deoxyribonucleotide-DNA = a 3'-end 2'-deoxyribonucleotide-(2,3-dehydro-2,3-deoxyribose 5'-phosphate)-DNA + a 5'-end 5'-phospho-2'-deoxyribonucleoside-DNA + H(+). Its function is as follows. Involved in base excision repair of DNA damaged by oxidation or by mutagenic agents. Acts as a DNA glycosylase that recognizes and removes damaged bases. Has a preference for oxidized purines, such as 7,8-dihydro-8-oxoguanine (8-oxoG). Has AP (apurinic/apyrimidinic) lyase activity and introduces nicks in the DNA strand. Cleaves the DNA backbone by beta-delta elimination to generate a single-strand break at the site of the removed base with both 3'- and 5'-phosphates. The polypeptide is Formamidopyrimidine-DNA glycosylase (Rhizobium etli (strain ATCC 51251 / DSM 11541 / JCM 21823 / NBRC 15573 / CFN 42)).